A 90-amino-acid chain; its full sequence is Small ribosomal subunit protein uS17 (90 aa).

The protein belongs to the universal ribosomal protein uS17 family. Part of the 30S ribosomal subunit.

One of the primary rRNA binding proteins, it binds specifically to the 5'-end of 16S ribosomal RNA. The sequence is that of Small ribosomal subunit protein uS17 from Paraburkholderia phytofirmans (strain DSM 17436 / LMG 22146 / PsJN) (Burkholderia phytofirmans).